Consider the following 556-residue polypeptide: 2-succinyl-5-enolpyruvyl-6-hydroxy-3-cyclohexene-1-carboxylate synthase (556 aa).

Belongs to the TPP enzyme family. MenD subfamily. In terms of assembly, homodimer. It depends on Mg(2+) as a cofactor. Mn(2+) is required as a cofactor. Thiamine diphosphate serves as cofactor.

The enzyme catalyses isochorismate + 2-oxoglutarate + H(+) = 5-enolpyruvoyl-6-hydroxy-2-succinyl-cyclohex-3-ene-1-carboxylate + CO2. Its pathway is quinol/quinone metabolism; 1,4-dihydroxy-2-naphthoate biosynthesis; 1,4-dihydroxy-2-naphthoate from chorismate: step 2/7. The protein operates within quinol/quinone metabolism; menaquinone biosynthesis. Catalyzes the thiamine diphosphate-dependent decarboxylation of 2-oxoglutarate and the subsequent addition of the resulting succinic semialdehyde-thiamine pyrophosphate anion to isochorismate to yield 2-succinyl-5-enolpyruvyl-6-hydroxy-3-cyclohexene-1-carboxylate (SEPHCHC). The chain is 2-succinyl-5-enolpyruvyl-6-hydroxy-3-cyclohexene-1-carboxylate synthase from Salmonella heidelberg (strain SL476).